Here is a 432-residue protein sequence, read N- to C-terminus: Glutamyl-tRNA reductase (432 aa).

Substrate is bound by residues 49–52 (TCNR), Ser109, 114–116 (EGQ), and Gln120. Cys50 serves as the catalytic Nucleophile. Residue 198 to 203 (GAGRMS) participates in NADP(+) binding.

It belongs to the glutamyl-tRNA reductase family. As to quaternary structure, homodimer.

It carries out the reaction (S)-4-amino-5-oxopentanoate + tRNA(Glu) + NADP(+) = L-glutamyl-tRNA(Glu) + NADPH + H(+). The protein operates within porphyrin-containing compound metabolism; protoporphyrin-IX biosynthesis; 5-aminolevulinate from L-glutamyl-tRNA(Glu): step 1/2. Its pathway is porphyrin-containing compound metabolism; chlorophyll biosynthesis. Catalyzes the NADPH-dependent reduction of glutamyl-tRNA(Glu) to glutamate 1-semialdehyde (GSA). This chain is Glutamyl-tRNA reductase, found in Parasynechococcus marenigrum (strain WH8102).